A 266-amino-acid polypeptide reads, in one-letter code: F-actin-capping protein subunit alpha (266 aa).

Belongs to the F-actin-capping protein alpha subunit family. As to quaternary structure, heterodimer of an alpha and a beta subunit.

It localises to the cytoplasm. Its subcellular location is the cytoskeleton. Functionally, F-actin-capping proteins bind in a Ca(2+)-independent manner to the fast growing ends of actin filaments (barbed end) thereby blocking the exchange of subunits at these ends. Unlike other capping proteins (such as gelsolin and severin), these proteins do not sever actin filaments. The polypeptide is F-actin-capping protein subunit alpha (CAP1) (Debaryomyces hansenii (strain ATCC 36239 / CBS 767 / BCRC 21394 / JCM 1990 / NBRC 0083 / IGC 2968) (Yeast)).